We begin with the raw amino-acid sequence, 91 residues long: uncharacterized protein (91 aa).

Belongs to the UPF0440 family.

This is an uncharacterized protein from Methanothermobacter thermautotrophicus (strain ATCC 29096 / DSM 1053 / JCM 10044 / NBRC 100330 / Delta H) (Methanobacterium thermoautotrophicum).